The primary structure comprises 277 residues: Uridine-cytidine kinase 1 (277 aa).

A compositionally biased stretch (gly residues) spans 1–10 (MASAGGGDCE). The tract at residues 1–29 (MASAGGGDCEGAGPEADRPHQRPFLIGVS) is disordered. 30–38 (GGTASGKST) contacts ATP. Residues Asp87, Tyr115, His120, Arg169, Arg178, and Gln186 each coordinate substrate. Asp215 contacts ATP. Positions 246-277 (RSHKRTFPEPGEHPAVLASGKRSHLESSSRPH) are disordered. Thr251 bears the Phosphothreonine mark. Basic and acidic residues predominate over residues 268–277 (SHLESSSRPH).

Belongs to the uridine kinase family.

It carries out the reaction uridine + ATP = UMP + ADP + H(+). It catalyses the reaction cytidine + ATP = CMP + ADP + H(+). It participates in pyrimidine metabolism; CTP biosynthesis via salvage pathway; CTP from cytidine: step 1/3. It functions in the pathway pyrimidine metabolism; UMP biosynthesis via salvage pathway; UMP from uridine: step 1/1. Phosphorylates uridine and cytidine to uridine monophosphate and cytidine monophosphate. Does not phosphorylate deoxyribonucleosides or purine ribonucleosides. Can use ATP or GTP as a phosphate donor. The polypeptide is Uridine-cytidine kinase 1 (UCK1) (Bos taurus (Bovine)).